Reading from the N-terminus, the 93-residue chain is Small ribosomal subunit protein uS19 (93 aa).

It belongs to the universal ribosomal protein uS19 family.

Its function is as follows. Protein S19 forms a complex with S13 that binds strongly to the 16S ribosomal RNA. This is Small ribosomal subunit protein uS19 from Frankia casuarinae (strain DSM 45818 / CECT 9043 / HFP020203 / CcI3).